The sequence spans 335 residues: Endo-beta-N-acetylglucosaminidase F2 (335 aa).

Residues 1 to 45 (MKTANFSFALCLSVVIMLFIKCTRSEQDLSVTKDAIAQKSGVTVS) form the signal peptide. Positions 61–321 (QISAGYYRTW…SSNDNTLRAP (261 aa)) constitute a GH18 domain. Residues S73, S89, and S143 are each glycosylated (O-linked (Man...) serine). Catalysis depends on E171, which acts as the Proton donor.

The protein belongs to the glycosyl hydrolase 18 family. As to quaternary structure, monomer. Post-translationally, carbohydrates at Ser-73, Ser-89 and Ser-143 consist of (2-OMe)Man1-4GlcNAcU1-4GlcU1-4Glc1-4(2-OMe)GlcU1-4[(2-OMe)Rham1-2]Man.

The protein resides in the secreted. It catalyses the reaction an N(4)-(oligosaccharide-(1-&gt;3)-[oligosaccharide-(1-&gt;6)]-beta-D-Man-(1-&gt;4)-beta-D-GlcNAc-(1-&gt;4)-alpha-D-GlcNAc)-L-asparaginyl-[protein] + H2O = an oligosaccharide-(1-&gt;3)-[oligosaccharide-(1-&gt;6)]-beta-D-Man-(1-&gt;4)-D-GlcNAc + N(4)-(N-acetyl-beta-D-glucosaminyl)-L-asparaginyl-[protein]. Functionally, endohydrolysis of the di-N-acetylchitobiosyl unit in high-mannose glycopeptides and glycoproteins. Complex biantennary glycans are the preferred substrates. Tri- and tetraantennary glycans are not hydrolyzed, and high mannose glycans are very poor substrates. This Elizabethkingia meningoseptica (Chryseobacterium meningosepticum) protein is Endo-beta-N-acetylglucosaminidase F2 (endOF2).